Reading from the N-terminus, the 511-residue chain is Sulfate adenylyltransferase (511 aa).

Residues 1-167 (MPAPHGGILQ…LEAIQLPQHY (167 aa)) form an N-terminal region. Positions 168–393 (DYPGLRKTPA…LRESNPPRPK (226 aa)) are catalytic. Residue Gln195 participates in sulfate binding. ATP contacts are provided by residues 195–198 (QTRN) and 289–292 (GRDH). Catalysis depends on residues Thr196, Arg197, and Asn198. Arg197 is a binding site for sulfate. Ala293 contacts sulfate. Position 331 (Val331) interacts with ATP. Residues 394–511 (QGFSIVLGNS…FLEDNGFFVF (118 aa)) are required for oligomerization; adenylyl-sulfate kinase-like.

This sequence belongs to the sulfate adenylyltransferase family. In terms of assembly, homohexamer. Dimer of trimers.

Its subcellular location is the cytoplasm. The enzyme catalyses sulfate + ATP + H(+) = adenosine 5'-phosphosulfate + diphosphate. Its pathway is sulfur metabolism; hydrogen sulfide biosynthesis; sulfite from sulfate: step 1/3. Its function is as follows. Catalyzes the first intracellular reaction of sulfate assimilation, forming adenosine-5'-phosphosulfate (APS) from inorganic sulfate and ATP. Plays an important role in sulfate activation as a component of the biosynthesis pathway of sulfur-containing amino acids. This Saccharomyces cerevisiae (strain ATCC 204508 / S288c) (Baker's yeast) protein is Sulfate adenylyltransferase.